We begin with the raw amino-acid sequence, 299 residues long: Class II hydrophobin C (299 aa).

Positions 1–17 (MKFLTVAAAIFASTSLA) are cleaved as a signal peptide. N-linked (GlcNAc...) asparagine glycosylation is found at asparagine 39, asparagine 78, and asparagine 91. Cystine bridges form between cysteine 232-cysteine 281, cysteine 242-cysteine 272, cysteine 243-cysteine 255, and cysteine 282-cysteine 293.

This sequence belongs to the cerato-ulmin hydrophobin family.

It is found in the secreted. The protein resides in the cell wall. The protein localises to the vacuole. It localises to the cytoplasmic vesicle. Its function is as follows. Aerial growth, conidiation, and dispersal of filamentous fungi in the environment rely upon a capability of their secreting small amphipathic proteins called hydrophobins (HPBs) with low sequence identity. Class I can self-assemble into an outermost layer of rodlet bundles on aerial cell surfaces, conferring cellular hydrophobicity that supports fungal growth, development and dispersal; whereas Class II form highly ordered films at water-air interfaces through intermolecular interactions but contribute nothing to the rodlet structure. Hyd2C contributes to certain cell wall-related features, such as hydrophobicity but is not involved in cell wall-related events during fungal proliferation in host hemocoel. Does not contribute to conidial hydrophobicity. Involved actively in the asexual development. This is Class II hydrophobin C from Beauveria bassiana (strain ARSEF 2860) (White muscardine disease fungus).